Reading from the N-terminus, the 527-residue chain is Putative ribose/galactose/methyl galactoside import ATP-binding protein 2 (527 aa).

The disordered stretch occupies residues 1-31; that stretch reads MFTARVARPMAGDDAPAASSGSTGSSAPPAS. Low complexity predominate over residues 12 to 31; the sequence is GDDAPAASSGSTGSSAPPAS. 2 ABC transporter domains span residues 38–274 and 284–523; these read LEVR…VGRE and VPIG…RIMD. 70–77 contacts ATP; it reads GENGAGKS.

It belongs to the ABC transporter superfamily. Carbohydrate importer 2 (CUT2) (TC 3.A.1.2) family.

The protein resides in the cell inner membrane. The enzyme catalyses D-ribose(out) + ATP + H2O = D-ribose(in) + ADP + phosphate + H(+). It carries out the reaction D-galactose(out) + ATP + H2O = D-galactose(in) + ADP + phosphate + H(+). Its function is as follows. Part of an ABC transporter complex involved in carbohydrate import. Could be involved in ribose, galactose and/or methyl galactoside import. Responsible for energy coupling to the transport system. In Burkholderia lata (strain ATCC 17760 / DSM 23089 / LMG 22485 / NCIMB 9086 / R18194 / 383), this protein is Putative ribose/galactose/methyl galactoside import ATP-binding protein 2.